Here is a 449-residue protein sequence, read N- to C-terminus: Cyclin-B1-1 (449 aa).

2 disordered regions span residues 1-34 and 90-143; these read MATRSQNVAAAPQPPQNRGNVAALGKQKAVVAGR and AVAP…SVRK. Composition is skewed to low complexity over residues 90 to 102 and 121 to 134; these read AVAPAAVARPAQR and EISSDSDQSMRQQS.

The protein belongs to the cyclin family. Cyclin AB subfamily.

The protein is Cyclin-B1-1 (CYCB1-1) of Oryza sativa subsp. japonica (Rice).